A 634-amino-acid chain; its full sequence is Alpha-L-iduronidase (634 aa).

An N-terminal signal peptide occupies residues 1-16 (MLTFFAAFLAAPLALA). Residues Pro-44, Leu-46, and His-48 each contribute to the alpha-D-mannopyranose site. An alpha-L-iduronate-binding site is contributed by His-81. A glycan (N-linked (GlcNAc...) asparagine) is linked at Asn-100. 2 residues coordinate alpha-L-iduronate: Asn-171 and Glu-172. The Proton donor role is filled by Glu-172. Residues Asn-180 and Asn-233 are each glycosylated (N-linked (GlcNAc...) asparagine). Alpha-L-iduronate-binding residues include Lys-254, Glu-289, and Gly-295. Residue Glu-289 is the Nucleophile of the active site. Alpha-D-mannopyranose is bound at residue Trp-296. N-linked (GlcNAc...) asparagine glycosylation is present at Asn-326. Asp-339 and Arg-353 together coordinate alpha-L-iduronate. Asn-362, Asn-405, and Asn-441 each carry an N-linked (GlcNAc...) asparagine glycan. Cys-531 and Cys-567 are disulfide-bonded.

It belongs to the glycosyl hydrolase 39 family. In terms of assembly, monomer. In terms of processing, N-glycosylation contributes to substrate binding and is required for full enzymatic activity. As to expression, ubiquitous.

It is found in the lysosome. It catalyses the reaction Hydrolysis of unsulfated alpha-L-iduronosidic linkages in dermatan sulfate.. The protein is Alpha-L-iduronidase (Idua) of Mus musculus (Mouse).